Here is a 340-residue protein sequence, read N- to C-terminus: Adenosine deaminase (340 aa).

2 residues coordinate Zn(2+): His15 and His17. 3 residues coordinate substrate: His17, Asp19, and Gly172. His199 contacts Zn(2+). Glu202 (proton donor) is an active-site residue. Asp279 provides a ligand contact to Zn(2+).

It belongs to the metallo-dependent hydrolases superfamily. Adenosine and AMP deaminases family. Adenosine deaminase subfamily. It depends on Zn(2+) as a cofactor.

It catalyses the reaction adenosine + H2O + H(+) = inosine + NH4(+). It carries out the reaction 2'-deoxyadenosine + H2O + H(+) = 2'-deoxyinosine + NH4(+). Its function is as follows. Catalyzes the hydrolytic deamination of adenosine and 2-deoxyadenosine. The polypeptide is Adenosine deaminase (Streptococcus agalactiae serotype Ia (strain ATCC 27591 / A909 / CDC SS700)).